The chain runs to 559 residues: Malate synthase, glyoxysomal (559 aa).

The active-site Proton acceptor is the arginine 173. Aspartate 459 serves as the catalytic Proton donor. The Microbody targeting signal motif lies at 557–559 (CKL).

The protein belongs to the malate synthase family.

It localises to the glyoxysome. It catalyses the reaction glyoxylate + acetyl-CoA + H2O = (S)-malate + CoA + H(+). It participates in carbohydrate metabolism; glyoxylate cycle; (S)-malate from isocitrate: step 2/2. The sequence is that of Malate synthase, glyoxysomal (LIP) from Zea mays (Maize).